Consider the following 180-residue polypeptide: Crossover junction endodeoxyribonuclease RuvC (180 aa).

Active-site residues include D7, E66, and D138. Residues D7, E66, and D138 each coordinate Mg(2+).

The protein belongs to the RuvC family. Homodimer which binds Holliday junction (HJ) DNA. The HJ becomes 2-fold symmetrical on binding to RuvC with unstacked arms; it has a different conformation from HJ DNA in complex with RuvA. In the full resolvosome a probable DNA-RuvA(4)-RuvB(12)-RuvC(2) complex forms which resolves the HJ. Requires Mg(2+) as cofactor.

The protein localises to the cytoplasm. It carries out the reaction Endonucleolytic cleavage at a junction such as a reciprocal single-stranded crossover between two homologous DNA duplexes (Holliday junction).. Functionally, the RuvA-RuvB-RuvC complex processes Holliday junction (HJ) DNA during genetic recombination and DNA repair. Endonuclease that resolves HJ intermediates. Cleaves cruciform DNA by making single-stranded nicks across the HJ at symmetrical positions within the homologous arms, yielding a 5'-phosphate and a 3'-hydroxyl group; requires a central core of homology in the junction. The consensus cleavage sequence is 5'-(A/T)TT(C/G)-3'. Cleavage occurs on the 3'-side of the TT dinucleotide at the point of strand exchange. HJ branch migration catalyzed by RuvA-RuvB allows RuvC to scan DNA until it finds its consensus sequence, where it cleaves and resolves the cruciform DNA. This Burkholderia vietnamiensis (strain G4 / LMG 22486) (Burkholderia cepacia (strain R1808)) protein is Crossover junction endodeoxyribonuclease RuvC.